The primary structure comprises 598 residues: Elongation factor 4 (598 aa).

Positions Asp-4–Lys-186 constitute a tr-type G domain. GTP contacts are provided by residues Asp-16 to Thr-21 and Asn-133 to Asp-136.

This sequence belongs to the TRAFAC class translation factor GTPase superfamily. Classic translation factor GTPase family. LepA subfamily.

It localises to the cell inner membrane. It carries out the reaction GTP + H2O = GDP + phosphate + H(+). In terms of biological role, required for accurate and efficient protein synthesis under certain stress conditions. May act as a fidelity factor of the translation reaction, by catalyzing a one-codon backward translocation of tRNAs on improperly translocated ribosomes. Back-translocation proceeds from a post-translocation (POST) complex to a pre-translocation (PRE) complex, thus giving elongation factor G a second chance to translocate the tRNAs correctly. Binds to ribosomes in a GTP-dependent manner. This chain is Elongation factor 4, found in Magnetococcus marinus (strain ATCC BAA-1437 / JCM 17883 / MC-1).